The chain runs to 291 residues: ATP synthase gamma chain (291 aa).

It belongs to the ATPase gamma chain family. In terms of assembly, F-type ATPases have 2 components, CF(1) - the catalytic core - and CF(0) - the membrane proton channel. CF(1) has five subunits: alpha(3), beta(3), gamma(1), delta(1), epsilon(1). CF(0) has three main subunits: a, b and c.

It localises to the cell inner membrane. Its function is as follows. Produces ATP from ADP in the presence of a proton gradient across the membrane. The gamma chain is believed to be important in regulating ATPase activity and the flow of protons through the CF(0) complex. In Roseobacter denitrificans (strain ATCC 33942 / OCh 114) (Erythrobacter sp. (strain OCh 114)), this protein is ATP synthase gamma chain.